Consider the following 263-residue polypeptide: Proline rich transmembrane protein 1B (263 aa).

The span at 1–17 (MEAGAGGAGSDTKGGGS) shows a compositional bias: gly residues. The disordered stretch occupies residues 1–107 (MEAGAGGAGS…IGFVGEPPPY (107 aa)). Composition is skewed to low complexity over residues 37–47 (QMPAQPALPQL) and 75–86 (DAPAQAAGEAGP). 2 helical membrane passes run 190–210 (MMES…IAIV) and 238–258 (VLFS…YVVV).

This sequence belongs to the CD225/Dispanin family.

The protein localises to the membrane. In Homo sapiens (Human), this protein is Proline rich transmembrane protein 1B.